The primary structure comprises 250 residues: NADH-quinone oxidoreductase subunit C (250 aa).

This sequence belongs to the complex I 30 kDa subunit family. In terms of assembly, NDH-1 is composed of 14 different subunits. Subunits NuoB, C, D, E, F, and G constitute the peripheral sector of the complex.

The protein resides in the cell inner membrane. It carries out the reaction a quinone + NADH + 5 H(+)(in) = a quinol + NAD(+) + 4 H(+)(out). Functionally, NDH-1 shuttles electrons from NADH, via FMN and iron-sulfur (Fe-S) centers, to quinones in the respiratory chain. The immediate electron acceptor for the enzyme in this species is believed to be ubiquinone. Couples the redox reaction to proton translocation (for every two electrons transferred, four hydrogen ions are translocated across the cytoplasmic membrane), and thus conserves the redox energy in a proton gradient. In Xylella fastidiosa (strain 9a5c), this protein is NADH-quinone oxidoreductase subunit C.